We begin with the raw amino-acid sequence, 124 residues long: MANKSAEHSHFPWKHIVGFALSIVLTLLALWVAVYTDLSSSAKLWIIFGFAFIQAALQLLMFMHMTESENGGIQVGNTLFGFFGAIVIVLGSIWIFAAHYHHGDHMDGNPPGGAEHSEHSGHNE.

3 consecutive transmembrane segments (helical) span residues 16-36 (IVGFALSIVLTLLALWVAVYT), 44-64 (LWIIFGFAFIQAALQLLMFMH), and 78-98 (TLFGFFGAIVIVLGSIWIFAA).

It belongs to the cytochrome c oxidase bacterial subunit 4 family.

It is found in the cell membrane. It catalyses the reaction 2 a quinol + O2 = 2 a quinone + 2 H2O. Its function is as follows. Catalyzes quinol oxidation with the concomitant reduction of oxygen to water. Major component for energy conversion during vegetative growth. This Bacillus spizizenii (strain ATCC 23059 / NRRL B-14472 / W23) (Bacillus subtilis subsp. spizizenii) protein is Quinol oxidase subunit 4 (qoxD).